A 408-amino-acid polypeptide reads, in one-letter code: MRSSCVLLTALVALAAYYVYIPLPGSVSDPWKLMLLDATFRGAQQVSNLIHYLGLSHHLLALNFIIVSFGKKSAWSSAQVKVTDTDFDGVEVRVFEGPPKPEEPLKRSVVYIHGGGWALASAKIRYYDELCTAMAEELNAVIVSIEYRLVPKVYFPEQIHDVVRATKYFLKPEVLQKYMVDPGRICISGDSAGGSLAAALGQQFTQDASLKNKLKLQALIYPVLQALDFNTPSYQQNVNTPILPRYVMVKYWVDYFKGNYDFVQAMIVNNHTSLDVEEAAALRARLNWTSLLPASFTKNYKPVVQTTGNARIVQELPQLLDARSAPLIADQAVLQLLPKTYILTCEHDVLRDDGIMYAKRLETAGVEVTLDHFEDGFHGCMIFTSRPTNFSVGIRTRNSYIKWLDQNL.

Residues 1 to 4 (MRSS) lie on the Cytoplasmic side of the membrane. Residues 5–25 (CVLLTALVALAAYYVYIPLPG) traverse the membrane as a helical; Signal-anchor for type II membrane protein segment. Topologically, residues 26–408 (SVSDPWKLML…SYIKWLDQNL (383 aa)) are lumenal. The short motif at 113–115 (HGG) is the Involved in the stabilization of the negatively charged intermediate by the formation of the oxyanion hole element. S191 is a catalytic residue. N-linked (GlcNAc...) asparagine glycosylation is found at N270 and N287. Residues D348 and H378 contribute to the active site. N389 carries an N-linked (GlcNAc...) asparagine glycan.

This sequence belongs to the 'GDXG' lipolytic enzyme family. N-glycosylated.

It is found in the cell membrane. The protein localises to the microsome. It carries out the reaction a 1-O-alkyl-2-acetyl-sn-glycerol + H2O = a 1-O-alkyl-sn-glycerol + acetate + H(+). The enzyme catalyses 1-O-hexadecyl-2-acetyl-sn-glycerol + H2O = 1-O-hexadecyl-sn-glycerol + acetate + H(+). It catalyses the reaction a cholesterol ester + H2O = cholesterol + a fatty acid + H(+). The catalysed reaction is cholesteryl (9Z-octadecenoate) + H2O = cholesterol + (9Z)-octadecenoate + H(+). In terms of biological role, hydrolyzes 2-acetyl monoalkylglycerol ether (1-O-alkyl-2-acetyl-sn-glycerol), the penultimate precursor of the pathway for de novo synthesis of platelet-activating factor. May be responsible for the hydrolysis of cholesterol esters (such as cholesteryl (9Z-octadecenoate)) in macrophages. Also involved in organ detoxification by hydrolyzing exogenous organophosphorus compounds. This chain is Neutral cholesterol ester hydrolase 1 (NCEH1), found in Pongo abelii (Sumatran orangutan).